Consider the following 497-residue polypeptide: Cytochrome P450 26A1 (497 aa).

Cys442 serves as a coordination point for heme.

The protein belongs to the cytochrome P450 family. The cofactor is heme.

It localises to the endoplasmic reticulum membrane. The protein localises to the microsome membrane. It catalyses the reaction all-trans-retinoate + reduced [NADPH--hemoprotein reductase] + O2 = all-trans-(4S)-hydroxyretinoate + oxidized [NADPH--hemoprotein reductase] + H2O + H(+). The catalysed reaction is all-trans-(4S)-hydroxyretinoate + reduced [NADPH--hemoprotein reductase] + O2 = all-trans-(4S,16)-dihydroxyretinoate + oxidized [NADPH--hemoprotein reductase] + H2O + H(+). The enzyme catalyses all-trans-retinoate + reduced [NADPH--hemoprotein reductase] + O2 = all-trans-18-hydroxyretinoate + oxidized [NADPH--hemoprotein reductase] + H2O + H(+). A cytochrome P450 monooxygenase involved in the metabolism of retinoates (RAs), the active metabolites of vitamin A, and critical signaling molecules in animals. RAs exist as at least four different isomers: all-trans-RA (atRA), 9-cis-RA, 13-cis-RA, and 9,13-dicis-RA, where atRA is considered to be the biologically active isomer, although 9-cis-RA and 13-cis-RA also have activity. Catalyzes the hydroxylation of atRA primarily at C-4 and C-18, thereby contributing to the regulation of atRA homeostasis and signaling. Hydroxylation of atRA limits its biological activity and initiates a degradative process leading to its eventual elimination. Involved in the convertion of atRA to all-trans-4-oxo-RA. Able to metabolize other RAs such as 9-cis, 13-cis and 9,13-di-cis RA. Can oxidize all-trans-13,14-dihydroretinoate (DRA) to metabolites which could include all-trans-4-oxo-DRA, all-trans-4-hydroxy-DRA, all-trans-5,8-epoxy-DRA, and all-trans-18-hydroxy-DRA. May play a role in the oxidative metabolism of xenobiotics such as tazarotenic acid. The chain is Cytochrome P450 26A1 from Mus musculus (Mouse).